The sequence spans 88 residues: MARVTVEDCLPMVDNRFALVLLATKRTRQLMAGARPLQAASKNKPPVLALREIATGKVRFDRSVRDALSGKFDKEKVNIPAGQTRTLR.

Belongs to the RNA polymerase subunit omega family. The RNAP catalytic core consists of 2 alpha, 1 beta, 1 beta' and 1 omega subunit. When a sigma factor is associated with the core the holoenzyme is formed, which can initiate transcription.

The enzyme catalyses RNA(n) + a ribonucleoside 5'-triphosphate = RNA(n+1) + diphosphate. In terms of biological role, promotes RNA polymerase assembly. Latches the N- and C-terminal regions of the beta' subunit thereby facilitating its interaction with the beta and alpha subunits. The polypeptide is DNA-directed RNA polymerase subunit omega (Anaeromyxobacter dehalogenans (strain 2CP-1 / ATCC BAA-258)).